The chain runs to 798 residues: Peregrinol diphosphate synthase TPS1, chloroplastic (798 aa).

The N-terminal 25 residues, 1–25, are a transit peptide targeting the chloroplast; sequence MASLSTPNINNTTFVNSKTQLPAVK. Lys243 is a substrate binding site. The Mg(2+) site is built by Asp377 and Asp379. Residues 377–380 carry the DXDD motif motif; the sequence is DLDD. Residue Lys463 participates in substrate binding.

This sequence belongs to the terpene synthase family. It depends on Mg(2+) as a cofactor. In terms of tissue distribution, mostly expressed in trichomes of leaves and fruits.

Its subcellular location is the plastid. It localises to the chloroplast. It carries out the reaction peregrinol diphosphate = (2E,6E,10E)-geranylgeranyl diphosphate + H2O. The protein operates within secondary metabolite biosynthesis; terpenoid biosynthesis. In terms of biological role, involved in the biosynthesis of labdane-type diterpenoid including cleroda-dienols, and peregrinol lactones and furan derivatives, dopaminergic diterpenoids that can bind to dopamine receptors in the human pituitary gland, have probably ability to lower prolactin levels, and are used to treat menstrual cycle disorders (e.g. premenstrual syndrome and mastodynia). Terpene synthase that produces peregrinol diphosphate from geranylgeranyl diphosphate (GGPP). The chain is Peregrinol diphosphate synthase TPS1, chloroplastic from Vitex agnus-castus (Chaste tree).